A 106-amino-acid chain; its full sequence is Large ribosomal subunit protein eL42 (106 aa).

The protein belongs to the eukaryotic ribosomal protein eL42 family. As to quaternary structure, component of the large ribosomal subunit.

Its subcellular location is the cytoplasm. Component of the large ribosomal subunit. The ribosome is a large ribonucleoprotein complex responsible for the synthesis of proteins in the cell. In Papio anubis (Olive baboon), this protein is Large ribosomal subunit protein eL42 (RPL36A).